A 372-amino-acid chain; its full sequence is N-acetylneuraminate-9-phosphate synthase (372 aa).

Residues 314 to 372 form the AFP-like domain; it reads SIVAARNLNKGYRLQLADMAIKVSEPSGLTAEDFLDLVGKELADNIGEDEPILGNSIIN.

It carries out the reaction aldehydo-N-acetyl-D-mannosamine 6-phosphate + phosphoenolpyruvate + H2O = N-acetylneuraminate 9-phosphate + phosphate. The enzyme catalyses aldehydo-D-mannose 6-phosphate + phosphoenolpyruvate + H2O = 3-deoxy-D-glycero-beta-D-galacto-non-2-ulopyranosonate 9-phosphate + phosphate. Catalyzes the condensation of phosphoenolpyruvate (PEP) and N-acetylmannosamine 6-phosphate (ManNAc-6-P) or D-mannose 6-phosphate (Man-6-P) to generate the phosphorylated forms of both the sialic acids N-acetylneuraminic acid (Neu5Ac) and deaminoneuraminic acid (KDN), respectively. Essential for biosynthesis of sialic acids in neurons of the central nervous system. The polypeptide is N-acetylneuraminate-9-phosphate synthase (Drosophila melanogaster (Fruit fly)).